Reading from the N-terminus, the 466-residue chain is MSMNPIHVVGGGLAGSEAAWQIAEAGVPVVLHEMRPVRRTDAHHTDRLAELVCSNSFRADDWTGNAVGLLHAEMRRLGSIIMSAGDAHQVPAGGALAVDREGFSQAVTERLEAHPLVTIAREEIAGLPPQDWDSVILATGPLTSPALADAVLKLTGEDQLSFFDAIAPIVHFESIDMDVAWRQSRYDKAGPGGDAAAYINCPMTEAQYEAFIDALLAAPKAEFKEWEHVPYFDGCLPIEVMAERGRETLRHGPMKPVGLTNAHRPDEKPHAVVQLRQDNALGTLWNMVGFQTKLKHGAQTEVFRMIPGLEKAVFARLGGLHRNTFINSPRLLDGVLRLKAQPRLRFAGQVTGVEGYVESAAVGLLAGRFAAAERLGRPAVAPPPTTALGGLIGHITGGHLEGGSGSFQPMNINYGLIPPIAPPKRDAEGRRLGAKEKTRIKKRLVGERALADLEAWLSGAQAVAAE.

10–15 (GGGLAG) serves as a coordination point for FAD.

This sequence belongs to the MnmG family. TrmFO subfamily. FAD is required as a cofactor.

It localises to the cytoplasm. The enzyme catalyses uridine(54) in tRNA + (6R)-5,10-methylene-5,6,7,8-tetrahydrofolate + NADH + H(+) = 5-methyluridine(54) in tRNA + (6S)-5,6,7,8-tetrahydrofolate + NAD(+). It catalyses the reaction uridine(54) in tRNA + (6R)-5,10-methylene-5,6,7,8-tetrahydrofolate + NADPH + H(+) = 5-methyluridine(54) in tRNA + (6S)-5,6,7,8-tetrahydrofolate + NADP(+). In terms of biological role, catalyzes the folate-dependent formation of 5-methyl-uridine at position 54 (M-5-U54) in all tRNAs. This is Methylenetetrahydrofolate--tRNA-(uracil-5-)-methyltransferase TrmFO from Phenylobacterium zucineum (strain HLK1).